The sequence spans 432 residues: E3 ubiquitin-protein ligase ATL42 (432 aa).

Positions 1-18 (MYQIFFFFLPLLHSYASA) are cleaved as a signal peptide. Residues 37 to 57 (LAVVTGVLAIMFALTFVLLVY) form a helical membrane-spanning segment. The RING-type; atypical zinc-finger motif lies at 123 to 165 (CSVCLSKFESVEILRLLPKCRHAFHIGCIDQWLEQHATCPLCR).

Belongs to the RING-type zinc finger family. ATL subfamily.

The protein resides in the membrane. The catalysed reaction is S-ubiquitinyl-[E2 ubiquitin-conjugating enzyme]-L-cysteine + [acceptor protein]-L-lysine = [E2 ubiquitin-conjugating enzyme]-L-cysteine + N(6)-ubiquitinyl-[acceptor protein]-L-lysine.. It functions in the pathway protein modification; protein ubiquitination. Functionally, E3 ubiquitin-protein ligase able to catalyze polyubiquitination with ubiquitin-conjugating enzyme E2 UBC8 in vitro. The sequence is that of E3 ubiquitin-protein ligase ATL42 (ATL42) from Arabidopsis thaliana (Mouse-ear cress).